The chain runs to 412 residues: MTTFPFAPSWLDELPARLAELDAVHLRRRRRTVRPLQGAHLDVDGQPMLAFCSNDYLGLAGHPALADAACAGAREFGVGSGGSPLVSGHSQANAALEADLARFVQLPRALYFYAGYATNTGIVPALVGAGDALFSDALNHACLIDGARLSRATIHRYPHGDLAALEALLAASPARRKLVVSDAVFSMDGDVADIRTLHALCERHDALLLLDDAHGFGVLGPQGRGALAEAGLTGQRASQRVLYMATLGKAAGAAGAFVAGSEVLIEWLLQKTRSYIFATAAPALLARTLQASLGLIERGDALRAHLDARIAQLRAGLVPVLQGTHWELGTSRTAVQALVIGANDEALAAMEALRARGLWVPAIRPPTVPEGTARLRIALSAAHTEADVARLVDALADIAPTARSALPQEAAA.

R28 provides a ligand contact to substrate. Residue 115–116 (GY) coordinates pyridoxal 5'-phosphate. Residue H140 participates in substrate binding. Positions 186, 214, and 246 each coordinate pyridoxal 5'-phosphate. Position 249 is an N6-(pyridoxal phosphate)lysine (K249). Substrate is bound at residue T367.

It belongs to the class-II pyridoxal-phosphate-dependent aminotransferase family. BioF subfamily. In terms of assembly, homodimer. The cofactor is pyridoxal 5'-phosphate.

It carries out the reaction 6-carboxyhexanoyl-[ACP] + L-alanine + H(+) = (8S)-8-amino-7-oxononanoate + holo-[ACP] + CO2. It functions in the pathway cofactor biosynthesis; biotin biosynthesis. In terms of biological role, catalyzes the decarboxylative condensation of pimeloyl-[acyl-carrier protein] and L-alanine to produce 8-amino-7-oxononanoate (AON), [acyl-carrier protein], and carbon dioxide. This chain is 8-amino-7-oxononanoate synthase, found in Paracidovorax citrulli (strain AAC00-1) (Acidovorax citrulli).